Here is a 277-residue protein sequence, read N- to C-terminus: Mitochondrial outer membrane protein porin 5 (277 aa).

Belongs to the eukaryotic mitochondrial porin (TC 1.B.8.1) family.

The protein resides in the mitochondrion outer membrane. Forms a channel through the mitochondrial outer membrane that allows diffusion of small hydrophilic molecules. The channel adopts an open conformation at low or zero membrane potential and a closed conformation at potentials above 30-40 mV. The open state has a weak anion selectivity whereas the closed state is cation-selective. This is Mitochondrial outer membrane protein porin 5 (VDAC5) from Oryza sativa subsp. japonica (Rice).